An 87-amino-acid chain; its full sequence is Translation initiation factor IF-1 2 (87 aa).

An S1-like domain is found at 1-72; it reads MAKEELLELD…TKGRINFRHK (72 aa).

Belongs to the IF-1 family. Component of the 30S ribosomal translation pre-initiation complex which assembles on the 30S ribosome in the order IF-2 and IF-3, IF-1 and N-formylmethionyl-tRNA(fMet); mRNA recruitment can occur at any time during PIC assembly.

It localises to the cytoplasm. Its function is as follows. One of the essential components for the initiation of protein synthesis. Stabilizes the binding of IF-2 and IF-3 on the 30S subunit to which N-formylmethionyl-tRNA(fMet) subsequently binds. Helps modulate mRNA selection, yielding the 30S pre-initiation complex (PIC). Upon addition of the 50S ribosomal subunit IF-1, IF-2 and IF-3 are released leaving the mature 70S translation initiation complex. The protein is Translation initiation factor IF-1 2 of Burkholderia vietnamiensis (strain G4 / LMG 22486) (Burkholderia cepacia (strain R1808)).